Here is a 233-residue protein sequence, read N- to C-terminus: MSACQTPIIVALDFPTRDAALKLADQLDPKLCRVKVGKELFTSCAAEIVGTLRDKGFEVFLDLKFHDIPNTTAMAVKAAAEMGVWMVNVHCSGGLRMMAACREVLDQRSGPKPLLIGVTVLTSMEREDLAGIGLDIEPQEQVLRLAALAQKAGMDGLVCSALEAQALKSAHPSLQLVTPGIRPAGSAQDDQRRILTPRQALDAGSDYLVIGRPISQAADPAKALADVVAELAL.

Substrate is bound by residues Asp13, Lys35, 62–71 (DLKFHDIPNT), Thr122, Arg182, Gln191, Gly211, and Arg212. Lys64 (proton donor) is an active-site residue.

It belongs to the OMP decarboxylase family. Type 1 subfamily. In terms of assembly, homodimer.

It catalyses the reaction orotidine 5'-phosphate + H(+) = UMP + CO2. The protein operates within pyrimidine metabolism; UMP biosynthesis via de novo pathway; UMP from orotate: step 2/2. Its function is as follows. Catalyzes the decarboxylation of orotidine 5'-monophosphate (OMP) to uridine 5'-monophosphate (UMP). The chain is Orotidine 5'-phosphate decarboxylase from Pseudomonas fluorescens (strain ATCC BAA-477 / NRRL B-23932 / Pf-5).